Here is a 115-residue protein sequence, read N- to C-terminus: Large ribosomal subunit protein bL20 (115 aa).

This sequence belongs to the bacterial ribosomal protein bL20 family.

In terms of biological role, binds directly to 23S ribosomal RNA and is necessary for the in vitro assembly process of the 50S ribosomal subunit. It is not involved in the protein synthesizing functions of that subunit. This is Large ribosomal subunit protein bL20 from Prochlorococcus marinus (strain NATL2A).